The following is a 559-amino-acid chain: Sporulation protein kinase mde3 (559 aa).

The Protein kinase domain occupies 21–323 (YLVKQKLGDG…TAKYCKEVFF (303 aa)). Residues 27–35 (LGDGSFGTV) and Lys-53 each bind ATP. The Proton acceptor role is filled by Asp-150.

The protein belongs to the protein kinase superfamily. Ser/Thr protein kinase family.

The enzyme catalyses L-seryl-[protein] + ATP = O-phospho-L-seryl-[protein] + ADP + H(+). It catalyses the reaction L-threonyl-[protein] + ATP = O-phospho-L-threonyl-[protein] + ADP + H(+). In terms of biological role, protein kinase which is essential for spore formation. The protein is Sporulation protein kinase mde3 (mde3) of Schizosaccharomyces pombe (strain 972 / ATCC 24843) (Fission yeast).